The chain runs to 467 residues: Cytochrome P450 85A3 (467 aa).

The chain crosses the membrane as a helical span at residues alanine 2–phenylalanine 22. Residue cysteine 417 coordinates heme.

It belongs to the cytochrome P450 family. Heme serves as cofactor. In terms of tissue distribution, expressed in fruits.

It localises to the membrane. It carries out the reaction 6-deoxocastasterone + reduced [NADPH--hemoprotein reductase] + O2 = 6alpha-hydroxycastasterone + oxidized [NADPH--hemoprotein reductase] + H2O + H(+). The enzyme catalyses 6alpha-hydroxycastasterone + reduced [NADPH--hemoprotein reductase] + O2 = castasterone + oxidized [NADPH--hemoprotein reductase] + 2 H2O + H(+). The catalysed reaction is castasterone + reduced [NADPH--hemoprotein reductase] + O2 = brassinolide + oxidized [NADPH--hemoprotein reductase] + H2O + H(+). It catalyses the reaction 6-deoxocastasterone + 2 reduced [NADPH--hemoprotein reductase] + 2 O2 = castasterone + 2 oxidized [NADPH--hemoprotein reductase] + 3 H2O + 2 H(+). It participates in plant hormone biosynthesis; brassinosteroid biosynthesis. Catalyzes the C6-oxidation step in brassinosteroids biosynthesis. Converts 6-deoxocastasterone (6-deoxoCS) to castasterone (CS), and castasterone (CS) to brassinolide (BL). The polypeptide is Cytochrome P450 85A3 (Solanum lycopersicum (Tomato)).